The following is a 174-amino-acid chain: Large ribosomal subunit protein uL15 (174 aa).

Disordered stretches follow at residues 1-56 (MKLH…GQMR) and 150-174 (VERRSRSRGPNPPRHHRKAEATPGA). Positions 21 to 35 (RGIGSGKGKTGGKGM) are enriched in gly residues.

This sequence belongs to the universal ribosomal protein uL15 family. In terms of assembly, part of the 50S ribosomal subunit.

In terms of biological role, binds to the 23S rRNA. This Roseiflexus castenholzii (strain DSM 13941 / HLO8) protein is Large ribosomal subunit protein uL15.